A 448-amino-acid polypeptide reads, in one-letter code: uncharacterized protein (448 aa).

12 helical membrane passes run 14–34 (PFIIGTIAIALFTDLFLYGII), 59–79 (TLLAVYAVANIAASSPIGFLA), 87–107 (VPMLIGLIFLTSATALLTFGN), 120–140 (GLSAAVVWTVGLALLVDVVGA), 148–168 (GGIFGFISLGEIIAPVFGGIV), 171–191 (SLGYYASFGVCFIILLLDIAL), 250–270 (IFGPFWTSFVNSCLFSAFDAT), 288–308 (LMFGVLSTPYFFCGAWAGAMV), 316–333 (IGKRAYAILGCTLFLLCI), 338–358 (TSLNIYLFSAFLAINGVVLAF), 392–412 (FSAYNIVYSLGMIIGPLVAGF), and 417–437 (FNFITSIACLSLLCFSASLMA).

The protein belongs to the major facilitator superfamily. TCR/Tet family.

It localises to the endoplasmic reticulum. The protein localises to the membrane. This is an uncharacterized protein from Schizosaccharomyces pombe (strain 972 / ATCC 24843) (Fission yeast).